A 396-amino-acid polypeptide reads, in one-letter code: Anhydro-N-acetylmuramic acid kinase (396 aa).

21 to 28 (GTSADGID) serves as a coordination point for ATP.

It belongs to the anhydro-N-acetylmuramic acid kinase family.

The enzyme catalyses 1,6-anhydro-N-acetyl-beta-muramate + ATP + H2O = N-acetyl-D-muramate 6-phosphate + ADP + H(+). It participates in amino-sugar metabolism; 1,6-anhydro-N-acetylmuramate degradation. It functions in the pathway cell wall biogenesis; peptidoglycan recycling. In terms of biological role, catalyzes the specific phosphorylation of 1,6-anhydro-N-acetylmuramic acid (anhMurNAc) with the simultaneous cleavage of the 1,6-anhydro ring, generating MurNAc-6-P. Is required for the utilization of anhMurNAc either imported from the medium or derived from its own cell wall murein, and thus plays a role in cell wall recycling. This chain is Anhydro-N-acetylmuramic acid kinase, found in Caldanaerobacter subterraneus subsp. tengcongensis (strain DSM 15242 / JCM 11007 / NBRC 100824 / MB4) (Thermoanaerobacter tengcongensis).